A 244-amino-acid chain; its full sequence is B3 domain-containing protein At2g36080 (244 aa).

The TF-B3 DNA-binding region spans 38-144 (FEKPLTPSDV…RFFIGWRRRG (107 aa)).

It localises to the nucleus. This is B3 domain-containing protein At2g36080 (ARF31) from Arabidopsis thaliana (Mouse-ear cress).